The following is a 267-amino-acid chain: 3-methyl-2-oxobutanoate hydroxymethyltransferase (267 aa).

Residues Asp-46 and Asp-85 each contribute to the Mg(2+) site. Residues 46–47 (DS), Asp-85, and Lys-115 contribute to the 3-methyl-2-oxobutanoate site. Glu-117 is a binding site for Mg(2+). The active-site Proton acceptor is Glu-184.

This sequence belongs to the PanB family. As to quaternary structure, homodecamer; pentamer of dimers. Requires Mg(2+) as cofactor.

The protein resides in the cytoplasm. It catalyses the reaction 3-methyl-2-oxobutanoate + (6R)-5,10-methylene-5,6,7,8-tetrahydrofolate + H2O = 2-dehydropantoate + (6S)-5,6,7,8-tetrahydrofolate. The protein operates within cofactor biosynthesis; (R)-pantothenate biosynthesis; (R)-pantoate from 3-methyl-2-oxobutanoate: step 1/2. Functionally, catalyzes the reversible reaction in which hydroxymethyl group from 5,10-methylenetetrahydrofolate is transferred onto alpha-ketoisovalerate to form ketopantoate. The protein is 3-methyl-2-oxobutanoate hydroxymethyltransferase of Syntrophotalea carbinolica (strain DSM 2380 / NBRC 103641 / GraBd1) (Pelobacter carbinolicus).